A 55-amino-acid chain; its full sequence is MIPVRCLSCGKPVSAYFNEYQRRVADGEDPKDVLDDLGLKRYCCRRMLISHVETW.

4 residues coordinate Zn(2+): cysteine 6, cysteine 9, cysteine 43, and cysteine 44.

Belongs to the archaeal Rpo10/eukaryotic RPB10 RNA polymerase subunit family. As to quaternary structure, part of the RNA polymerase complex. Requires Zn(2+) as cofactor.

The protein resides in the cytoplasm. It carries out the reaction RNA(n) + a ribonucleoside 5'-triphosphate = RNA(n+1) + diphosphate. In terms of biological role, DNA-dependent RNA polymerase (RNAP) catalyzes the transcription of DNA into RNA using the four ribonucleoside triphosphates as substrates. This Methanothermobacter thermautotrophicus (strain ATCC 29096 / DSM 1053 / JCM 10044 / NBRC 100330 / Delta H) (Methanobacterium thermoautotrophicum) protein is DNA-directed RNA polymerase subunit Rpo10.